A 276-amino-acid chain; its full sequence is MKLCDFEVGLDQPLFLIAGPCVIESMQLQLDVAGKLKEITGKLGINFIFKSSFDKANRTSGTSFRGPGLEEGLKVLDAVKKQIGVPVLTDVHEYTPMNEVAAVVDVLQTPAFLVRQTDFIKNVCAAGKPVNIKKGQFLAPWDMKPVVDKAKSTGNEQIMVCERGASFGYNNLVSDMRSLSVMRDTGCPVVFDATHSVQLPGGQGSSSGGQREFVPVLARAAVAVGISGLFAETHPDPSKALSDGPNAWPLDRMEELLETLMELDAVTKKHGFARFA.

Belongs to the KdsA family.

It is found in the cytoplasm. The enzyme catalyses D-arabinose 5-phosphate + phosphoenolpyruvate + H2O = 3-deoxy-alpha-D-manno-2-octulosonate-8-phosphate + phosphate. It participates in carbohydrate biosynthesis; 3-deoxy-D-manno-octulosonate biosynthesis; 3-deoxy-D-manno-octulosonate from D-ribulose 5-phosphate: step 2/3. Its pathway is bacterial outer membrane biogenesis; lipopolysaccharide biosynthesis. The polypeptide is 2-dehydro-3-deoxyphosphooctonate aldolase (Xanthomonas campestris pv. campestris (strain 8004)).